A 475-amino-acid chain; its full sequence is Peripherin (475 aa).

A disordered region spans residues 1–42 (MPSSASMSHHHSSGLRSSISSTSYRRTFGPPPSLSPGAFSYS). Positions 1–103 (MPSSASMSHH…FLATRSNEKQ (103 aa)) are head. Positions 14–26 (GLRSSISSTSYRR) are enriched in low complexity. Residue Y24 is modified to 3'-nitrotyrosine. S35 and S57 each carry phosphoserine. At S66 the chain carries Phosphoserine; by PKB/AKT1. An IF rod domain is found at 101 to 411 (EKQELQELND…KLLEGEESRI (311 aa)). Residues 104-136 (ELQELNDRFANFIEKVRFLEQQNAALRGELSQA) are coil 1A. Positions 137 to 147 (RGQEPARADQL) are linker 1. Positions 148–243 (CQQELRELRR…KLHEEELRDL (96 aa)) are coil 1B. The tract at residues 244–266 (QVSVESQQVQQVEVEATVKPELT) is linker 2. The coil 2 stretch occupies residues 267 to 409 (AALRDIRAQY…YRKLLEGEES (143 aa)). Y383 carries the 3'-nitrotyrosine modification. Positions 410-475 (RISVPVHSFA…DLDKSSIHSY (66 aa)) are tail. Residues 453–475 (EKVVTESQKEQHSDLDKSSIHSY) form a disordered region. Y475 bears the Phosphotyrosine mark.

The protein belongs to the intermediate filament family. In terms of assembly, forms homodimers (in vitro). Homopolymerizes into a filamentous network (in vitro). Forms heterodimers with NEFL, NEFM or NEFH (in vitro). Interacts with DST (via C-terminus). Interacts with RAB7A; the interaction is direct. Interacts with PRKCE (via phorbol-ester/DAG-type 2 domain). Phosphorylated; phosphorylation increases after nerve injury in regenerating neurons. As to expression, expressed in the sciatic nerve and at very low levels in the central nervous system (at protein level). Expressed in the spinal cord, in the sciatic nerve at the level of the dorsal root ganglion and in trigeminal nerves (at protein level). Expressed in the cranial nerves in the hindbrain, including the sensory and motor trigeminal neurons, the mesencephalic trigeminal neurons, the spinal trigeminal neurons, and in the facial nerve (at protein level). Expressed in the cerebellum, with expression in the inferior cerebellar peduncle and the lateral deep cerebellar nucleus (at protein level). Expressed in vestibulocochlear neurons, such as the anteroventral cochlear nucleus, the dorsal cochlear nucleus, the superficial granule cell layer and the granule cell lamina (at protein level). Expressed in glossopharyngeal, vagal and hypoglossal neurons (at protein level). Expressed in peripheral sensory neurons, in the dorsal root ganglia and the spinal cord, and to a lower extent in motor neurons. Expressed in the optic tract of the central nervous system, especially in the lateral geniculate nucleus and the superior colliculus. Expressed in neurons of the pineal stalk in the cortex. Expressed in the spinal trigeminal tract of the midbrain, in the medulla and in the medial cerebellar peduncle.

It is found in the cytoplasm. The protein localises to the cytoskeleton. It localises to the cell projection. Its subcellular location is the axon. The protein resides in the perikaryon. In terms of biological role, class-III neuronal intermediate filament protein. May form an independent structural network without the involvement of other neurofilaments or may cooperate with the neuronal intermediate filament proteins NEFL, NEFH, NEFM and INA to form filamentous networks. Assembly of the neuronal intermediate filaments may be regulated by RAB7A. Plays a role in the development of unmyelinated sensory neurons. May be involved in axon elongation and axon regeneration after injury. Inhibits neurite extension in type II spiral ganglion neurons in the cochlea. In Mus musculus (Mouse), this protein is Peripherin (Prph).